Reading from the N-terminus, the 506-residue chain is Probable E3 ubiquitin-protein ligase ARI14 (506 aa).

A TRIAD supradomain region spans residues proline 79–glutamate 308. The segment at serine 83 to cysteine 140 adopts an RING-type 1 zinc-finger fold. Zn(2+) contacts are provided by cysteine 106, histidine 108, cysteine 135, cysteine 140, cysteine 180, cysteine 185, cysteine 207, cysteine 209, cysteine 214, cysteine 217, histidine 222, cysteine 227, cysteine 258, cysteine 261, cysteine 277, cysteine 279, cysteine 284, cysteine 287, histidine 294, and cysteine 304. Residues glutamate 158–cysteine 227 form an IBR-type zinc finger. Residues cysteine 258 to cysteine 287 form an RING-type 2; atypical zinc finger. The RanBP2-type zinc finger occupies glycine 462 to serine 492.

It belongs to the RBR family. Ariadne subfamily. Zn(2+) is required as a cofactor. In terms of tissue distribution, mostly expressed in closed flowers and, to a lower extent, in pollen.

It catalyses the reaction [E2 ubiquitin-conjugating enzyme]-S-ubiquitinyl-L-cysteine + [acceptor protein]-L-lysine = [E2 ubiquitin-conjugating enzyme]-L-cysteine + [acceptor protein]-N(6)-ubiquitinyl-L-lysine.. Its pathway is protein modification; protein ubiquitination. Might act as an E3 ubiquitin-protein ligase, or as part of E3 complex, which accepts ubiquitin from specific E2 ubiquitin-conjugating enzymes and then transfers it to substrates. Negatively regulates male gametophyte formation and double fertilization. This is Probable E3 ubiquitin-protein ligase ARI14 from Arabidopsis thaliana (Mouse-ear cress).